The chain runs to 299 residues: Putative hydrolase YtaP (299 aa).

This sequence belongs to the dienelactone hydrolase family.

The polypeptide is Putative hydrolase YtaP (ytaP) (Bacillus subtilis (strain 168)).